A 361-amino-acid chain; its full sequence is Chorismate synthase (361 aa).

NADP(+) contacts are provided by Arg48 and Arg54. Residues 125–127 (RSS), 238–239 (NA), Gly278, 293–297 (KPTSS), and Arg319 each bind FMN.

The protein belongs to the chorismate synthase family. As to quaternary structure, homotetramer. The cofactor is FMNH2.

The enzyme catalyses 5-O-(1-carboxyvinyl)-3-phosphoshikimate = chorismate + phosphate. Its pathway is metabolic intermediate biosynthesis; chorismate biosynthesis; chorismate from D-erythrose 4-phosphate and phosphoenolpyruvate: step 7/7. Functionally, catalyzes the anti-1,4-elimination of the C-3 phosphate and the C-6 proR hydrogen from 5-enolpyruvylshikimate-3-phosphate (EPSP) to yield chorismate, which is the branch point compound that serves as the starting substrate for the three terminal pathways of aromatic amino acid biosynthesis. This reaction introduces a second double bond into the aromatic ring system. This is Chorismate synthase from Vibrio parahaemolyticus serotype O3:K6 (strain RIMD 2210633).